Consider the following 152-residue polypeptide: SKP1-like protein 11 (152 aa).

Residues 94–152 (ILAANYLNIKSLLDLTCQTVADMIKGKTPEEIRSTFNIENDFTPEEEEAVRKENQWAFE) form an interaction with the F-box domain of F-box proteins region.

It belongs to the SKP1 family. In terms of assembly, part of a SCF (SKP1-cullin-F-box) protein ligase complex. Interacts with ADO3/FKF1, COI1/FBL2, EBF1/FBL6, PP2A13, PP2B10, UFO, SKIP2, SKIP15, SKIP16, SKIP32, CPR1/CPR30, At1g55000, At1g67340, At1g78100, At3g04660, At3g16740, At3g61590, At4g38940 and At5g49610. In terms of tissue distribution, expressed in young seedlings, cotyledons, roots, leaves, floral stems, inflorescences, pollen, and siliques, with a slightly higher level in inflorescence than in other tissues.

Its subcellular location is the nucleus. It participates in protein modification; protein ubiquitination. Involved in ubiquitination and subsequent proteasomal degradation of target proteins. Together with CUL1, RBX1 and a F-box protein, it forms a SCF E3 ubiquitin ligase complex. The functional specificity of this complex depends on the type of F-box protein. In the SCF complex, it serves as an adapter that links the F-box protein to CUL1. Plays a role during early flowers reproductive development. In Arabidopsis thaliana (Mouse-ear cress), this protein is SKP1-like protein 11 (ASK11).